The chain runs to 968 residues: Phosphoenolpyruvate carboxylase (968 aa).

At Ser-11 the chain carries Phosphoserine. Active-site residues include His-172 and Lys-602.

Belongs to the PEPCase type 1 family. In terms of assembly, homotetramer. Requires Mg(2+) as cofactor.

The protein localises to the cytoplasm. It carries out the reaction oxaloacetate + phosphate = phosphoenolpyruvate + hydrogencarbonate. By light-reversible phosphorylation. Functionally, through the carboxylation of phosphoenolpyruvate (PEP) it forms oxaloacetate, a four-carbon dicarboxylic acid source for the tricarboxylic acid cycle. This chain is Phosphoenolpyruvate carboxylase, found in Phaseolus vulgaris (Kidney bean).